A 935-amino-acid polypeptide reads, in one-letter code: MAPAGILNGKVVSAQIRNRLKTQVTQMQEQVPGFTPGLAILQVGDRDDSNLYINVKLKAAQEIGIKATHIKLPRTSTESEVLKYVISLNEDATVHGFIVQLPLDSENSINTEAVINAIAPEKDVDGLTSINAGKLARGDLKDCFIPCTPKGCLELIKETGVQIAGRHAVVVGRSKIVGAPMHDLLLWNNATVTTCHSKTADLDKEVNKGDILVVATGQPEMVKGEWIKPGAVVIDCGINYVPDDTKPNGRKVVGDVAYDEAKEKASFITPVPGGVGPMTVAMLMQSTVESAQRFLKKFKPGKWTIQYNKLNLKTPVPSDIAISRSCKPKLIGNLAREIGLLTEEVELYGETKAKVLLSALDRLKHQPDGKYVVVTGITPTPLGEGKSTTTIGLVQALGAHLHQNVFACVRQPSQGPTFGIKGGAAGGGYSQVIPMEEFNLHLTGDIHAITAANNLVAAAIDARIFHELTQTDKALFNRLVPSVNGVRKFSDIQIRRLRRLGIEKTDPAALTDDEINRFARLDIDPETITWQRVLDTNDRFLRKITIGQAPTEKGHTRTAQFDISVASEIMAVLALTSSLEDMRARLGKMVVASSKKGEPISCEDLGVSGALTVLMKDAIKPNLMQTLEGTPVFVHAGPFANIAHGNSSIIADRIALKLVGPEGFVVTEAGFGADIGMEKFFNIKCRYSGLQPHVVVLVATVRALKMHGGGPTVTAGLPLPKAYTEEDLDLVEKGFSNLRKQIENARMFGVPVVVAMNAFKTDTDTELDLIGRLSREHGAFDAVKCTHWAEGGQGALALAQAVQRASQAPSSFQLLYDLKLSVEDKIRIIAQKIYGADDIELLPEAQNKAEIYTKQGFGNLPICMAKTHLSLSHNPEQKGVPTGFVLPIRDIRASVGAGFLYPLVGTMSTMPGLPTRPCFYDIDLDPETEQVNGLF.

N-acetylmethionine is present on methionine 1. The tract at residues 2–291 is methylenetetrahydrofolate dehydrogenase and methenyltetrahydrofolate cyclohydrolase (D/C) domain; it reads APAGILNGKV…MLMQSTVESA (290 aa). Residues 52 to 56 and 99 to 101 contribute to the substrate site; these read YINVK and VQL. Lysine 56 is an active-site residue. NADP(+) is bound by residues 172-174 and serine 197; that span reads GRS. A substrate-binding site is contributed by 272-276; sequence PGGVG. Residues 310–935 form a formyltetrahydrofolate synthetase domain region; it reads LNLKTPVPSD…PETEQVNGLF (626 aa). Serine 318 carries the post-translational modification Phosphoserine. 380-387 contributes to the ATP binding site; it reads TPLGEGKS. A phosphoserine mark is found at serine 413 and serine 490.

The protein in the N-terminal section; belongs to the tetrahydrofolate dehydrogenase/cyclohydrolase family. It in the C-terminal section; belongs to the formate--tetrahydrofolate ligase family. Homodimer.

It localises to the cytoplasm. It catalyses the reaction (6R)-5,10-methylene-5,6,7,8-tetrahydrofolate + NADP(+) = (6R)-5,10-methenyltetrahydrofolate + NADPH. It carries out the reaction (6R)-5,10-methenyltetrahydrofolate + H2O = (6R)-10-formyltetrahydrofolate + H(+). The enzyme catalyses (6S)-5,6,7,8-tetrahydrofolate + formate + ATP = (6R)-10-formyltetrahydrofolate + ADP + phosphate. The protein operates within one-carbon metabolism; tetrahydrofolate interconversion. Its function is as follows. Trifunctional enzyme that catalyzes the interconversion of three forms of one-carbon-substituted tetrahydrofolate: (6R)-5,10-methylene-5,6,7,8-tetrahydrofolate, 5,10-methenyltetrahydrofolate and (6S)-10-formyltetrahydrofolate. These derivatives of tetrahydrofolate are differentially required in nucleotide and amino acid biosynthesis, (6S)-10-formyltetrahydrofolate being required for purine biosynthesis while (6R)-5,10-methylene-5,6,7,8-tetrahydrofolate is used for serine and methionine biosynthesis for instance. This Rattus norvegicus (Rat) protein is C-1-tetrahydrofolate synthase, cytoplasmic (Mthfd1).